We begin with the raw amino-acid sequence, 309 residues long: Beta-ketoacyl-[acyl-carrier-protein] synthase III (309 aa).

Residues cysteine 111 and histidine 236 contribute to the active site. The ACP-binding stretch occupies residues 237–241 (QANVR). The active site involves asparagine 266.

Belongs to the thiolase-like superfamily. FabH family. In terms of assembly, homodimer.

It is found in the cytoplasm. It catalyses the reaction malonyl-[ACP] + acetyl-CoA + H(+) = 3-oxobutanoyl-[ACP] + CO2 + CoA. The protein operates within lipid metabolism; fatty acid biosynthesis. Catalyzes the condensation reaction of fatty acid synthesis by the addition to an acyl acceptor of two carbons from malonyl-ACP. Catalyzes the first condensation reaction which initiates fatty acid synthesis and may therefore play a role in governing the total rate of fatty acid production. Possesses both acetoacetyl-ACP synthase and acetyl transacylase activities. Its substrate specificity determines the biosynthesis of branched-chain and/or straight-chain of fatty acids. The protein is Beta-ketoacyl-[acyl-carrier-protein] synthase III of Aquifex aeolicus (strain VF5).